Here is a 258-residue protein sequence, read N- to C-terminus: Triosephosphate isomerase (258 aa).

11–13 contributes to the substrate binding site; that stretch reads NWK. His101 acts as the Electrophile in catalysis. Glu173 (proton acceptor) is an active-site residue. Substrate-binding positions include Gly179, Ser219, and 240-241; that span reads GG.

The protein belongs to the triosephosphate isomerase family. As to quaternary structure, homodimer.

It is found in the cytoplasm. The catalysed reaction is D-glyceraldehyde 3-phosphate = dihydroxyacetone phosphate. It participates in carbohydrate biosynthesis; gluconeogenesis. Its pathway is carbohydrate degradation; glycolysis; D-glyceraldehyde 3-phosphate from glycerone phosphate: step 1/1. In terms of biological role, involved in the gluconeogenesis. Catalyzes stereospecifically the conversion of dihydroxyacetone phosphate (DHAP) to D-glyceraldehyde-3-phosphate (G3P). The chain is Triosephosphate isomerase from Streptomyces coelicolor (strain ATCC BAA-471 / A3(2) / M145).